The sequence spans 548 residues: Eukaryotic translation initiation factor 3 subunit D (548 aa).

Lys-53 bears the N6-acetyllysine mark. A Phosphoserine modification is found at Ser-161. The tract at residues Asp-285–Pro-299 is RNA gate. Positions Pro-523 to Ala-548 are disordered. Ser-528 and Ser-529 each carry phosphoserine. Acidic residues predominate over residues Ser-529–Ala-548.

This sequence belongs to the eIF-3 subunit D family. Component of the eukaryotic translation initiation factor 3 (eIF-3) complex, which is composed of 13 subunits: EIF3A, EIF3B, EIF3C, EIF3D, EIF3E, EIF3F, EIF3G, EIF3H, EIF3I, EIF3J, EIF3K, EIF3L and EIF3M. The eIF-3 complex appears to include 3 stable modules: module A is composed of EIF3A, EIF3B, EIF3G and EIF3I; module B is composed of EIF3F, EIF3H, and EIF3M; and module C is composed of EIF3C, EIF3D, EIF3E, EIF3K and EIF3L. EIF3C of module C binds EIF3B of module A and EIF3H of module B, thereby linking the three modules. EIF3J is a labile subunit that binds to the eIF-3 complex via EIF3B. The eIF-3 complex interacts with RPS6KB1 under conditions of nutrient depletion. Mitogenic stimulation leads to binding and activation of a complex composed of MTOR and RPTOR, leading to phosphorylation and release of RPS6KB1 and binding of EIF4B to eIF-3.

The protein localises to the cytoplasm. Functionally, mRNA cap-binding component of the eukaryotic translation initiation factor 3 (eIF-3) complex, a complex required for several steps in the initiation of protein synthesis of a specialized repertoire of mRNAs. The eIF-3 complex associates with the 40S ribosome and facilitates the recruitment of eIF-1, eIF-1A, eIF-2:GTP:methionyl-tRNAi and eIF-5 to form the 43S pre-initiation complex (43S PIC). The eIF-3 complex stimulates mRNA recruitment to the 43S PIC and scanning of the mRNA for AUG recognition. The eIF-3 complex is also required for disassembly and recycling of post-termination ribosomal complexes and subsequently prevents premature joining of the 40S and 60S ribosomal subunits prior to initiation. The eIF-3 complex specifically targets and initiates translation of a subset of mRNAs involved in cell proliferation, including cell cycling, differentiation and apoptosis, and uses different modes of RNA stem-loop binding to exert either translational activation or repression. In the eIF-3 complex, EIF3D specifically recognizes and binds the 7-methylguanosine cap of a subset of mRNAs. The polypeptide is Eukaryotic translation initiation factor 3 subunit D (Bos taurus (Bovine)).